The chain runs to 344 residues: Heat-inducible transcription repressor HrcA (344 aa).

Belongs to the HrcA family.

Its function is as follows. Negative regulator of class I heat shock genes (grpE-dnaK-dnaJ and groELS operons). Prevents heat-shock induction of these operons. This chain is Heat-inducible transcription repressor HrcA, found in Streptococcus sanguinis (strain SK36).